Here is a 74-residue protein sequence, read N- to C-terminus: Putative membrane protein insertion efficiency factor (74 aa).

The protein belongs to the UPF0161 family.

It localises to the cell inner membrane. Its function is as follows. Could be involved in insertion of integral membrane proteins into the membrane. The sequence is that of Putative membrane protein insertion efficiency factor from Anaeromyxobacter sp. (strain Fw109-5).